The sequence spans 309 residues: D-galacturonate reductase (309 aa).

Y50 acts as the Proton donor in catalysis. A substrate-binding site is contributed by H109. Residue 210 to 264 (SPLGSTGSPLMSADPVVKIAEKKGISPTTVLLSYHVNRGSTVLAKSVTPARIKAN) participates in NADP(+) binding.

It belongs to the aldo/keto reductase family.

It carries out the reaction L-galactonate + NADP(+) = aldehydo-D-galacturonate + NADPH + H(+). It functions in the pathway carbohydrate acid metabolism. Mediates the reduction of D-galacturonate to L-galactonate, the first step in D-galacturonate catabolic process. Also has activity with D-glucuronate and DL-glyceraldehyde. No activity is observed with D-glucose, D-fructose, D-xylose, D-galactose, L-arabinose or D-mannose. Activity is seen only with NADPH and not with NADH. The chain is D-galacturonate reductase (gar1) from Hypocrea jecorina (Trichoderma reesei).